The chain runs to 263 residues: Phosphatidylglycerol--prolipoprotein diacylglyceryl transferase (263 aa).

The next 4 membrane-spanning stretches (helical) occupy residues 16 to 36 (LAVS…WFYA), 55 to 75 (FVTY…ILLY), 92 to 112 (EGGM…YIFC), and 117 to 137 (LNFL…LFFG). Residue R138 coordinates a 1,2-diacyl-sn-glycero-3-phospho-(1'-sn-glycerol). 3 consecutive transmembrane segments (helical) span residues 172–192 (QLYE…YAVF), 201–221 (GLNS…IEIF), and 234–254 (SLTM…YLII).

This sequence belongs to the Lgt family.

It is found in the cell inner membrane. It carries out the reaction L-cysteinyl-[prolipoprotein] + a 1,2-diacyl-sn-glycero-3-phospho-(1'-sn-glycerol) = an S-1,2-diacyl-sn-glyceryl-L-cysteinyl-[prolipoprotein] + sn-glycerol 1-phosphate + H(+). Its pathway is protein modification; lipoprotein biosynthesis (diacylglyceryl transfer). Functionally, catalyzes the transfer of the diacylglyceryl group from phosphatidylglycerol to the sulfhydryl group of the N-terminal cysteine of a prolipoprotein, the first step in the formation of mature lipoproteins. This Rickettsia bellii (strain OSU 85-389) protein is Phosphatidylglycerol--prolipoprotein diacylglyceryl transferase.